Here is a 182-residue protein sequence, read N- to C-terminus: Troponin I, fast skeletal muscle (182 aa).

Gly-2 is modified (N-acetylglycine). Positions 2-48 (GDEEKRNRAITARRQHLKSVMLQIAATELEKEESRREAEKQNYLAEH) are involved in binding TNC. Thr-12 is modified (phosphothreonine). The segment at 97–117 (NQKLFDLRGKFKRPPLRRVRM) is involved in binding TNC and actin. A Phosphoserine modification is found at Ser-118.

The protein belongs to the troponin I family. In terms of assembly, binds to actin and tropomyosin.

In terms of biological role, troponin I is the inhibitory subunit of troponin, the thin filament regulatory complex which confers calcium-sensitivity to striated muscle actomyosin ATPase activity. The polypeptide is Troponin I, fast skeletal muscle (TNNI2) (Homo sapiens (Human)).